The primary structure comprises 157 residues: Peptide methionine sulfoxide reductase MsrA (157 aa).

The active site involves cysteine 13.

The protein belongs to the MsrA Met sulfoxide reductase family.

The catalysed reaction is L-methionyl-[protein] + [thioredoxin]-disulfide + H2O = L-methionyl-(S)-S-oxide-[protein] + [thioredoxin]-dithiol. The enzyme catalyses [thioredoxin]-disulfide + L-methionine + H2O = L-methionine (S)-S-oxide + [thioredoxin]-dithiol. Its function is as follows. Has an important function as a repair enzyme for proteins that have been inactivated by oxidation. Catalyzes the reversible oxidation-reduction of methionine sulfoxide in proteins to methionine. In Methanococcus maripaludis (strain C5 / ATCC BAA-1333), this protein is Peptide methionine sulfoxide reductase MsrA.